The chain runs to 289 residues: ATP synthase gamma chain (289 aa).

Belongs to the ATPase gamma chain family. F-type ATPases have 2 components, CF(1) - the catalytic core - and CF(0) - the membrane proton channel. CF(1) has five subunits: alpha(3), beta(3), gamma(1), delta(1), epsilon(1). CF(0) has three main subunits: a, b and c.

The protein localises to the cell inner membrane. Its function is as follows. Produces ATP from ADP in the presence of a proton gradient across the membrane. The gamma chain is believed to be important in regulating ATPase activity and the flow of protons through the CF(0) complex. This is ATP synthase gamma chain from Pasteurella multocida (strain Pm70).